A 502-amino-acid chain; its full sequence is Keratin, type II cytoskeletal 8 (502 aa).

A head region spans residues 1–98 (MSVRSTKVTY…DPSIQQVRTE (98 aa)). Serine 13, serine 26, serine 37, and serine 40 each carry phosphoserine. Positions 99–134 (EKEQIKTLNNKFASFIDKVRFLEQQNKMLETKWNLL) are coil 1A. In terms of domain architecture, IF rod spans 99–410 (EKEQIKTLNN…KLLEGEESRL (312 aa)). Residues 135–151 (QNQKTTRSNMDGMFEAY) are linker 1. The tract at residues 152–243 (ISNLRRQLDG…QLYEEELREM (92 aa)) is coil 1B. The interval 244-267 (QSQISDTSVVLSMDNNRSLDLDGI) is linker 12. A coil 2 region spans residues 268–406 (IAEVRAQYED…ATYRKLLEGE (139 aa)). A necessary for interaction with PNN region spans residues 269-390 (AEVRAQYEDV…DYQELMNVKL (122 aa)). The tail stretch occupies residues 407–502 (ESRLESGFQN…SESSDVFSKP (96 aa)). Phosphoserine is present on residues serine 425, serine 428, serine 436, and serine 444.

Belongs to the intermediate filament family. As to quaternary structure, heterotetramer of two type I and two type II keratins. Keratin-8 associates with keratin-18. Expressed in oocytes, eggs, embryos, liver and intestinal mucosa.

The protein localises to the cytoplasm. The protein resides in the nucleus. Its subcellular location is the nucleoplasm. It is found in the nucleus matrix. Its function is as follows. Together with KRT19, helps to link the contractile apparatus to dystrophin at the costameres of striated muscle. The polypeptide is Keratin, type II cytoskeletal 8 (Xenopus laevis (African clawed frog)).